The primary structure comprises 178 residues: uncharacterized protein (178 aa).

An N-terminal signal peptide occupies residues 1 to 19; that stretch reads MINRKILLTSLLLIFTVLS. Residues Arg52, Glu60, and Arg94 contribute to the active site.

Belongs to the thermonuclease family.

This is an uncharacterized protein from Haemophilus influenzae (strain ATCC 51907 / DSM 11121 / KW20 / Rd).